The chain runs to 424 residues: Probable serine/threonine-protein kinase PBL12 (424 aa).

Positions 88–368 constitute a Protein kinase domain; the sequence is FSRSNMLGEG…CEVVKVLESI (281 aa). Residues 94 to 102 and K123 contribute to the ATP site; that span reads LGEGGFGPV. Catalysis depends on D218, which acts as the Proton acceptor.

Belongs to the protein kinase superfamily. Ser/Thr protein kinase family. In terms of tissue distribution, expressed specifically in roots.

It localises to the cell membrane. It carries out the reaction L-seryl-[protein] + ATP = O-phospho-L-seryl-[protein] + ADP + H(+). The enzyme catalyses L-threonyl-[protein] + ATP = O-phospho-L-threonyl-[protein] + ADP + H(+). Functionally, may play a role in the signal transduction pathway of osmotic stress. May be involved in plant defense signaling. In Arabidopsis thaliana (Mouse-ear cress), this protein is Probable serine/threonine-protein kinase PBL12.